The sequence spans 43 residues: SPbeta prophage-derived uncharacterized protein YotD (43 aa).

This is SPbeta prophage-derived uncharacterized protein YotD (yotD) from Bacillus subtilis (strain 168).